We begin with the raw amino-acid sequence, 3013 residues long: Genome polyprotein (3013 aa).

The residue at position 2 (Ser-2) is an N-acetylserine; by host. The tract at residues 2 to 23 is interaction with STAT1; sequence STLPKPQKRNQRNTNRRPQDVK. The interaction with EIF2AK2/PKR stretch occupies residues 2–58; it reads STLPKPQKRNQRNTNRRPQDVKFPGGGQIVGGVYLLPRRGPRLGVRATRKTSERSQP. Residues 2–59 form an interaction with DDX3X region; that stretch reads STLPKPQKRNQRNTNRRPQDVKFPGGGQIVGGVYLLPRRGPRLGVRATRKTSERSQPR. Positions 2–75 are disordered; sequence STLPKPQKRN…PKARRQTGRT (74 aa). Over 2 to 168 the chain is Cytoplasmic; it reads STLPKPQKRN…EDGINYATGN (167 aa). Short sequence motifs (nuclear localization signal) lie at residues 5–13 and 38–43; these read PKPQKRNQR and PRRGPR. A compositionally biased stretch (basic residues) spans 7–16; sequence PQKRNQRNTN. The span at 32-47 shows a compositional bias: low complexity; the sequence is GGVYLLPRRGPRLGVR. Ser-53 bears the Phosphoserine; by host mark. Short sequence motifs (nuclear localization signal) lie at residues 58-64 and 66-71; these read PRGRRQP and PKARRQ. The span at 58 to 72 shows a compositional bias: basic residues; the sequence is PRGRRQPIPKARRQT. Ser-99 and Ser-116 each carry phosphoserine; by host. The segment at 112-152 is important for endoplasmic reticulum and mitochondrial localization; it reads PRRRSRNLGKVIDTLTCGFADLMGYIPVVGAPLGGVAAALA. The interaction with APOA2 stretch occupies residues 122 to 173; it reads VIDTLTCGFADLMGYIPVVGAPLGGVAAALAHGVRAVEDGINYATGNLPGCS. Residues 164 to 167 are important for lipid droplets localization; that stretch reads YATG. A helical transmembrane segment spans residues 169–189; it reads LPGCSFSIFLLALLSCLTTPA. Positions 178–191 are cleaved as a propeptide — ER anchor for the core protein, removed in mature form by host signal peptidase; the sequence is LLALLSCLTTPASA. The Lumenal segment spans residues 190 to 358; that stretch reads SAVHYANKSG…TGGHWGILAG (169 aa). Residues Asn-196, Asn-209, Asn-234, and Asn-250 are each glycosylated (N-linked (GlcNAc...) asparagine; by host). The important for fusion stretch occupies residues 265 to 296; that stretch reads MVGAAAFCSAMYVGDLCGGIFLVGQLFSFNPR. Asn-305 carries N-linked (GlcNAc...) asparagine; by host glycosylation. A helical membrane pass occupies residues 359 to 379; that stretch reads ILYYSMVANWAKVLCILFLFA. The Lumenal portion of the chain corresponds to 380–723; sequence GVDATTRTTG…WEYVVLAFLL (344 aa). Residues 385–412 form an HVR1 region; that stretch reads TRTTGAQAARATLGFTGLFQTGAKQNIH. N-linked (GlcNAc...) (high mannose) asparagine; by host glycans are attached at residues Asn-417, Asn-423, and Asn-430. 4 disulfide bridges follow: Cys-429/Cys-553, Cys-452/Cys-459, Cys-487/Cys-495, and Cys-504/Cys-509. Asn-448 is a glycosylation site (N-linked (GlcNAc...) asparagine; by host). An HVR2 region spans residues 475-479; sequence ANVSG. The N-linked (GlcNAc...) asparagine; by host glycan is linked to Asn-476. Positions 481–494 are CD81-binding 1; that stretch reads SEDRPYCWHYAPRP. Residue Asn-533 is glycosylated (N-linked (GlcNAc...) asparagine; by host). The interval 545 to 552 is CD81-binding 2; that stretch reads PPAGAWYG. An N-linked (GlcNAc...) asparagine; by host glycan is attached at Asn-557. 4 disulfide bridges follow: Cys-565–Cys-570, Cys-579–Cys-583, Cys-595–Cys-618, and Cys-605–Cys-642. N-linked (GlcNAc...) (high mannose) asparagine; by host glycans are attached at residues Asn-621 and Asn-643. Cys-650 and Cys-675 are oxidised to a cystine. The tract at residues 658–669 is PKR/eIF2-alpha phosphorylation homology domain (PePHD); sequence IEMSPLLFSTTE. Residues 724 to 744 form a helical membrane-spanning segment; sequence LADARICACLWMVLLISQVEA. Residues 745–755 are Lumenal-facing; the sequence is ALENLIVLNAA. The chain crosses the membrane as a helical span at residues 756-776; sequence SAASSQGWIYCLVFICCAWYI. Topologically, residues 777–780 are cytoplasmic; the sequence is KGRV. A helical transmembrane segment spans residues 781–801; that stretch reads VPGATYAILHLWPLLLLVLAL. Residues 802–811 lie on the Lumenal side of the membrane; sequence PQRAYAQDRE. The helical transmembrane segment at 812 to 832 threads the bilayer; sequence QGASIGVVVIAAITIFTLTPA. The Cytoplasmic segment spans residues 833 to 879; it reads YKTMLVHFLWWNQYFIARSEALIQQWVPSLRVRGGRDAVILLTCLLH. A helical transmembrane segment spans residues 880–900; that stretch reads PSLGFDITKMLLALLGPLYLL. The Lumenal portion of the chain corresponds to 901–926; the sequence is QVSLLRVPYYVRAHALLRVCILVRRV. The Peptidase C18 domain maps to 901–1024; that stretch reads QVSLLRVPYY…DMKSMGWRLL (124 aa). Positions 902-1204 are protease NS2-3; it reads VSLLRVPYYV…PVENMETTMR (303 aa). A lipid anchor (S-palmitoyl cysteine; by host) is attached at Cys-920. Residues 927 to 947 form a helical membrane-spanning segment; sequence AGGKYIQAALLKLGAWTGTYI. Residues 927–947 form an interaction with host SCPS1 region; it reads AGGKYIQAALLKLGAWTGTYI. At 948-1655 the chain is on the cytoplasmic side; sequence YDHLAPLSTW…CMAADLEVIT (708 aa). Active-site for protease NS2 activity; shared with dimeric partner residues include His-950, Glu-970, and Cys-991. Positions 1025–1206 constitute a Peptidase S29 domain; the sequence is APITAYCQQT…ENMETTMRSP (182 aa). Catalysis depends on charge relay system; for serine protease NS3 activity residues His-1081 and Asp-1105. Residues Cys-1121 and Cys-1123 each contribute to the Zn(2+) site. The Charge relay system; for serine protease NS3 activity role is filled by Ser-1163. Zn(2+)-binding residues include Cys-1169 and His-1173. The Helicase ATP-binding domain maps to 1215–1367; sequence PAVPQTYQVG…PNITETALPS (153 aa). 1228–1235 contributes to the ATP binding site; sequence APTGSGKS. Residues Ser-1235 and Glu-1315 each coordinate Mg(2+). Positions 1314–1317 match the DECH box motif; it reads DECH. A Helicase C-terminal domain is found at 1374–1536; sequence YGKAIPLECI…ELTPSETTVR (163 aa). Residues 1484–1496 are RNA-binding; the sequence is QRRGRTGRGKPGV. The chain crosses the membrane as a helical span at residues 1656 to 1676; it reads STWVLAGGIVAALAAYCLTVG. The interval 1677–1688 is NS3-binding; the sequence is SVVICGRIVTSG. Residues 1677–1803 lie on the Cytoplasmic side of the membrane; the sequence is SVVICGRIVT…ALTSPLSTST (127 aa). Residues 1804–1824 form a helical membrane-spanning segment; the sequence is TLLLNILGGWVASQLAPPTAS. Residues 1825–1826 lie on the Lumenal side of the membrane; it reads TA. Residues 1827–1847 traverse the membrane as a helical segment; it reads FVVSGLAGAAVGSIGLGKVII. Asp-1848 is a topological domain (cytoplasmic). A helical membrane pass occupies residues 1849 to 1869; it reads ILAGYGAGVSGALVAFKIMSG. At 1870-1879 the chain is on the lumenal side; sequence EAPAVEDMVN. The chain crosses the membrane as a helical span at residues 1880 to 1900; it reads LLPALLSPGALVVGVVCAAVL. Residues 1901 to 1970 lie on the Cytoplasmic side of the membrane; sequence RRHVGPSEGA…WISGDWSAPC (70 aa). Cys-1970 carries S-palmitoyl cysteine; by host lipidation. The stretch at 1971–2000 is an intramembrane region; sequence SCSWLKDVWDWVCTVLSDFKTWLRAKLVPT. Over 2001 to 2992 the chain is Cytoplasmic; the sequence is LPGIPFISCQ…FHSVSRARPR (992 aa). Zn(2+)-binding residues include Cys-2009, Cys-2027, Cys-2029, and Cys-2050. The segment at 2118 to 2206 is FKBP8-binding; that stretch reads EFFTEVDGVR…ASSSASQLSA (89 aa). The segment at 2118-2331 is transcriptional activation; it reads EFFTEVDGVR…PVPPPRKKRV (214 aa). The interval 2133–2137 is interaction with non-structural protein 4A; sequence PPCRP. The interval 2187 to 2440 is interaction with host SKP2; that stretch reads RLARGSPPSL…ALITPCAAEE (254 aa). 6 positions are modified to phosphoserine; by host: Ser-2192, Ser-2195, Ser-2199, Ser-2202, Ser-2205, and Ser-2208. The interval 2208–2247 is ISDR; sequence SLKATCTTAGKHPDAELIEANLLWRQEVGGNITRVESENK. The segment at 2208-2273 is interaction with EIF2AK2/PKR; sequence SLKATCTTAG…REISVGAECF (66 aa). The NS4B-binding stretch occupies residues 2247–2305; the sequence is KIIVLDSFDPLIAETDDREISVGAECFNPPRPKFPPALPVWARPDYNPPLLQPWKAPDY. A V3 region spans residues 2298-2376; the sequence is QPWKAPDYEP…STLSSDMTPP (79 aa). The tract at residues 2316 to 2411 is disordered; it reads PPKGLPPVPP…PDLSSGSWST (96 aa). Residues 2321 to 2324 carry the SH3-binding motif; it reads PPVP. Positions 2326–2334 match the Nuclear localization signal motif; sequence PRKKRVVQL. A compositionally biased stretch (polar residues) spans 2347–2373; the sequence is AQTSFPPSTATLSEDSGRETSTLSSDM. Positions 2375-2385 are enriched in basic and acidic residues; that stretch reads PPREEADRASD. Ser-2464 carries the phosphoserine; by host modification. Positions 2636-2754 constitute a RdRp catalytic domain; it reads PMGFSYDTRC…ISESMGVAED (119 aa). Positions 2642, 2740, and 2741 each coordinate Mg(2+). Residues 2993–3013 traverse the membrane as a helical segment; sequence NLLLCLLLLTVGVGIFLLPAR.

The protein belongs to the hepacivirus polyprotein family. Homooligomer. Interacts with E1 (via C-terminus). Interacts with the non-structural protein 5A. Interacts (via N-terminus) with host STAT1 (via SH2 domain); this interaction results in decreased STAT1 phosphorylation and ubiquitin-mediated proteasome-dependent STAT1 degradation, leading to decreased IFN-stimulated gene transcription. Interacts with host STAT3; this interaction constitutively activates STAT3. Interacts with host LTBR receptor. Interacts with host TNFRSF1A receptor and possibly induces apoptosis. Interacts with host HNRPK. Interacts with host YWHAE. Interacts with host UBE3A/E6AP. Interacts with host DDX3X. Interacts with host APOA2. Interacts with host RXRA protein. Interacts with host SP110 isoform 3/Sp110b; this interaction sequesters the transcriptional corepressor SP110 away from the nucleus. Interacts with host CREB3 nuclear transcription protein; this interaction triggers cell transformation. Interacts with host ACY3. Interacts with host C1QR1. Interacts with host RBM24; this interaction, which enhances the interaction of the mature core protein with 5'-UTR, may inhibit viral translation and favor replication. Interacts with host EIF2AK2/PKR; this interaction induces the autophosphorylation of EIF2AK2. Part of the viral assembly initiation complex composed of NS2, E1, E2, NS3, NS4A, NS5A and the mature core protein. In terms of assembly, forms a heterodimer with envelope glycoprotein E2. Interacts with mature core protein. Interacts with protease NS2. The heterodimer E1/E2 interacts with host CLDN1; this interaction plays a role in viral entry into host cell. Interacts with host SPSB2 (via C-terminus). Part of the viral assembly initiation complex composed of NS2, E1, E2, NS3, NS4A, NS5A and the mature core protein. Interacts with host NEURL3; this interaction prevents E1 binding to glycoprotein E2. As to quaternary structure, forms a heterodimer with envelope glycoprotein E1. Interacts with host CD81 and SCARB1 receptors; these interactions play a role in viral entry into host cell. Interacts with host EIF2AK2/PKR; this interaction inhibits EIF2AK2 and probably allows the virus to evade the innate immune response. Interacts with host CD209/DC-SIGN and CLEC4M/DC-SIGNR. Interact with host SPCS1; this interaction is essential for viral particle assembly. Interacts with protease NS2. The heterodimer E1/E2 interacts with host CLDN1; this interaction plays a role in viral entry into host cell. Part of the viral assembly initiation complex composed of NS2, E1, E2, NS3, NS4A, NS5A and the mature core protein. Interacts with host SLC3A2/4F2hc; the interaction may facilitate viral entry into host cell. Interacts with human PLSCR1. Homohexamer. Homoheptamer. Interacts with protease NS2. In terms of assembly, homodimer. Interacts with host SPCS1; this interaction is essential for viral particle assembly. Interacts with envelope glycoprotein E1. Interacts with envelope glycoprotein E2. Interacts with viroporin p7. Interacts with serine protease/helicase NS3. Part of the replication complex composed of NS2, NS3, NS4A, NS4B, NS5A and the RNA-directed RNA polymerase embedded in an ER-derived membranous web. Part of the viral assembly initiation complex composed of NS2, E1, E2, NS3, NS4A, NS5A and the mature core protein. As to quaternary structure, interacts with protease NS2. Interacts with non-structural protein 4A; this interaction stabilizes the folding of NS3 serine protease. NS3-NS4A interaction is essential for NS3 activation and allows membrane anchorage of the latter. NS3/NS4A complex also prevents phosphorylation of host IRF3, thus preventing the establishment of dsRNA induced antiviral state. Interacts with host MAVS; this interaction leads to the cleavage and inhibition of host MAVS. Interacts with host TICAM1; this interaction leads to the cleavage and inhibition of host TICAM1. Interacts with host TANK-binding kinase/TBK1; this interaction results in the inhibition of the association between TBK1 and IRF3, which leads to the inhibition of IRF3 activation. Interacts with host RBM24. Part of the replication complex composed of NS2, NS3, NS4A, NS4B, NS5A and the RNA-directed RNA polymerase embedded in an ER-derived membranous web. Part of the viral assembly initiation complex composed of NS2, E1, E2, NS3, NS4A, NS5A and the mature core protein. Interacts with NS3 serine protease; this interaction stabilizes the folding of NS3 serine protease. NS3-NS4A interaction is essential for NS3 activation and allows membrane anchorage of the latter. Interacts with non-structural protein 5A (via N-terminus). Part of the replication complex composed of NS2, NS3, NS4A, NS4B, NS5A and the RNA-directed RNA polymerase embedded in an ER-derived membranous web. Part of the viral assembly initiation complex composed of NS2, E1, E2, NS3, NS4A, NS5A and the mature core protein. In terms of assembly, homomultimer. Interacts with non-structural protein NS5A. Interacts with host PLA2G4C; this interaction likely initiates the recruitment of replication complexes to lipid droplets. Interacts with host STING; this interaction disrupts the interaction between STING and TBK1 thereby suppressing the interferon signaling. Part of the replication complex composed of NS2, NS3, NS4A, NS4B, NS5A and the RNA-directed RNA polymerase embedded in an ER-derived membranous web. As to quaternary structure, monomer. Homodimer; dimerization is required for RNA-binding. Interacts with the mature core protein. Interacts (via N-terminus) with non-structural protein 4A. Interacts with non-structural protein 4B. Interacts (via region D2) with RNA-directed RNA polymerase. Part of the viral assembly initiation complex composed of NS2, E1, E2, NS3, NS4A, NS5A and the mature core protein. Part of the replication complex composed of NS2, NS3, NS4A, NS4B, NS5A and the RNA-directed RNA polymerase embedded in an ER-derived membranous web. Interacts with host GRB2. Interacts with host BIN1. Interacts with host PIK3R1. Interacts with host SRCAP. Interacts with host FKBP8. Interacts (via C-terminus) with host VAPB (via MSP domain). Interacts with host EIF2AK2/PKR; this interaction leads to disruption of EIF2AK2 dimerization by NS5A and probably allows the virus to evade the innate immune response. Interacts (via N-terminus) with host PACSIN2 (via N-terminus); this interaction attenuates protein kinase C alpha-mediated phosphorylation of PACSIN2 by disrupting the interaction between PACSIN2 and PRKCA. Interacts (via N-terminus) with host SRC kinase (via SH2 domain). Interacts with most Src-family kinases. Interacts with host IFI27 and SKP2; promotes the ubiquitin-mediated proteasomal degradation of NS5A. Interacts with host GPS2. Interacts with host TNFRSF21; this interaction allows the modulation by the virus of JNK, p38 MAPK, STAT3, and Akt signaling pathways in a DR6-dependent manner. Interacts (via N-terminus) with host CIDEB (via N-terminus); this interaction seems to regulate the association of HCV particles with APOE. Interacts with host CHKA/Choline Kinase-alpha; CHKA bridges host PI4KA and NS5A and potentiates NS5A-stimulated PI4KA activity, which then facilitates the targeting of the ternary complex to the ER for viral replication. Interacts with host SPSB2 (via C-terminus); this interaction targets NS5A for ubiquitination and degradation. Interacts with host RAB18; this interaction may promote the association of NS5A and other replicase components with lipid droplets. Interacts (via region D2) with host PPIA/CYPA; the interaction stimulates RNA-binding ability of NS5A and is dependent on the peptidyl-prolyl cis-trans isomerase activity of PPIA/CYPA. Interacts with host TRIM14; this interaction induces the degradation of NS5A. Homooligomer. Interacts with non-structural protein 5A. Interacts with host VAPB. Interacts with host PRK2/PKN2. Interacts with host HNRNPA1 and SEPT6; these interactions facilitate viral replication. Part of the replication complex composed of NS2, NS3, NS4A, NS4B, NS5A and the RNA-directed RNA polymerase. Zn(2+) is required as a cofactor. Requires Mg(2+) as cofactor. Specific enzymatic cleavages in vivo yield mature proteins. The structural proteins, core, E1, E2 and p7 are produced by proteolytic processing by host signal peptidases. The core protein precursor is synthesized as a 23 kDa, which is retained in the ER membrane through the hydrophobic signal peptide. Cleavage by the signal peptidase releases the 21 kDa mature core protein. The cleavage of the core protein precursor occurs between aminoacids 176 and 188 but the exact cleavage site is not known. Some degraded forms of the core protein appear as well during the course of infection. The other proteins (p7, NS2, NS3, NS4A, NS4B, NS5A and NS5B) are cleaved by the viral proteases. Autoprocessing between NS2 and NS3 is mediated by the NS2 cysteine protease catalytic domain and regulated by the NS3 N-terminal domain. In terms of processing, phosphorylated by host PKC and PKA. Post-translationally, ubiquitinated; mediated by UBE3A and leading to core protein subsequent proteasomal degradation. Highly N-glycosylated. In terms of processing, palmitoylation is required for NS2/3 autoprocessing and E2 recruitment to membranes. Post-translationally, palmitoylated. This modification may play a role in its polymerization or in protein-protein interactions. Phosphorylated on serines in a basal form termed p56. p58 is a hyperphosphorylated form of p56. p56 and p58 coexist in the cell in roughly equivalent amounts. Hyperphosphorylation is dependent on the presence of NS4A. Host CSNK1A1/CKI-alpha or RPS6KB1 kinases may be responsible for NS5A phosphorylation. In terms of processing, tyrosine phosphorylation is essential for the interaction with host SRC. Post-translationally, the N-terminus is phosphorylated by host PRK2/PKN2.

The protein localises to the host endoplasmic reticulum membrane. It is found in the host mitochondrion membrane. The protein resides in the virion. Its subcellular location is the host cytoplasm. It localises to the host nucleus. The protein localises to the host lipid droplet. It is found in the virion membrane. The protein resides in the host mitochondrion. Its subcellular location is the host cell membrane. It localises to the host perinuclear region. The enzyme catalyses Hydrolysis of four peptide bonds in the viral precursor polyprotein, commonly with Asp or Glu in the P6 position, Cys or Thr in P1 and Ser or Ala in P1'.. It catalyses the reaction a ribonucleoside 5'-triphosphate + H2O = a ribonucleoside 5'-diphosphate + phosphate + H(+). The catalysed reaction is ATP + H2O = ADP + phosphate + H(+). It carries out the reaction RNA(n) + a ribonucleoside 5'-triphosphate = RNA(n+1) + diphosphate. With respect to regulation, inhibited by the antiviral drug hexamethylene amiloride. Inhibition by amantadine appears to be genotype-dependent. Also inhibited by long-alkyl-chain iminosugar derivatives. Its activity is regulated as follows. Activity is up-regulated by PRK2/PKN2-mediated phosphorylation. Packages viral RNA to form a viral nucleocapsid, and promotes virion budding. Participates in the viral particle production as a result of its interaction with the non-structural protein 5A. Binds RNA and may function as a RNA chaperone to induce the RNA structural rearrangements taking place during virus replication. Modulates viral translation initiation by interacting with viral IRES and 40S ribosomal subunit. Affects various cell signaling pathways, host immunity and lipid metabolism. Prevents the establishment of cellular antiviral state by blocking the interferon-alpha/beta (IFN-alpha/beta) and IFN-gamma signaling pathways and by blocking the formation of phosphorylated STAT1 and promoting ubiquitin-mediated proteasome-dependent degradation of STAT1. Activates STAT3 leading to cellular transformation. Regulates the activity of cellular genes, including c-myc and c-fos. May repress the promoter of p53, and sequester CREB3 and SP110 isoform 3/Sp110b in the cytoplasm. Represses cell cycle negative regulating factor CDKN1A, thereby interrupting an important check point of normal cell cycle regulation. Targets transcription factors involved in the regulation of inflammatory responses and in the immune response: suppresses TNF-induced NF-kappa-B activation, and activates AP-1. Binds to dendritic cells (DCs) via C1QR1, resulting in down-regulation of T-lymphocytes proliferation. Alters lipid metabolism by interacting with hepatocellular proteins involved in lipid accumulation and storage. Induces up-regulation of FAS promoter activity, and thereby contributes to the increased triglyceride accumulation in hepatocytes (steatosis). In terms of biological role, forms a heterodimer with envelope glycoprotein E2, which mediates virus attachment to the host cell, virion internalization through clathrin-dependent endocytosis and fusion with host membrane. Fusion with the host cell is most likely mediated by both E1 and E2, through conformational rearrangements of the heterodimer required for fusion rather than a classical class II fusion mechanism. E1/E2 heterodimer binds host apolipoproteins such as APOB and ApoE thereby forming a lipo-viro-particle (LVP). APOE associated to the LVP allows the initial virus attachment to cell surface receptors such as the heparan sulfate proteoglycans (HSPGs), syndecan-1 (SDC1), syndecan-1 (SDC2), the low-density lipoprotein receptor (LDLR) and scavenger receptor class B type I (SCARB1). The cholesterol transfer activity of SCARB1 allows E2 exposure and binding of E2 to SCARB1 and the tetraspanin CD81. E1/E2 heterodimer binding on CD81 activates the epithelial growth factor receptor (EGFR) signaling pathway. Diffusion of the complex E1-E2-EGFR-SCARB1-CD81 to the cell lateral membrane allows further interaction with Claudin 1 (CLDN1) and occludin (OCLN) to finally trigger HCV entry. Its function is as follows. Forms a heterodimer with envelope glycoprotein E1, which mediates virus attachment to the host cell, virion internalization through clathrin-dependent endocytosis and fusion with host membrane. Fusion with the host cell is most likely mediated by both E1 and E2, through conformational rearrangements of the heterodimer required for fusion rather than a classical class II fusion mechanism. The interaction between envelope glycoprotein E2 and host apolipoprotein E/APOE allows the proper assembly, maturation and infectivity of the viral particles. This interaction is probably promoted via the up-regulation of cellular autophagy by the virus. E1/E2 heterodimer binds host apolipoproteins such as APOB and APOE thereby forming a lipo-viro-particle (LVP). APOE associated to the LVP allows the initial virus attachment to cell surface receptors such as the heparan sulfate proteoglycans (HSPGs), syndecan-1 (SDC1), syndecan-1 (SDC2), the low-density lipoprotein receptor (LDLR) and scavenger receptor class B type I (SCARB1). The cholesterol transfer activity of SCARB1 allows E2 exposure and binding of E2 to SCARB1 and the tetraspanin CD81. E1/E2 heterodimer binding on CD81 activates the epithelial growth factor receptor (EGFR) signaling pathway. Diffusion of the complex E1-E2-EGFR-SCARB1-CD81 to the cell lateral membrane allows further interaction with Claudin 1 (CLDN1) and occludin (OCLN) to finally trigger HCV entry. Inhibits host EIF2AK2/PKR activation, preventing the establishment of an antiviral state. Viral ligand for CD209/DC-SIGN and CLEC4M/DC-SIGNR, which are respectively found on dendritic cells (DCs), and on liver sinusoidal endothelial cells and macrophage-like cells of lymph node sinuses. These interactions allow the capture of circulating HCV particles by these cells and subsequent facilitated transmission to permissive cells such as hepatocytes and lymphocyte subpopulations. The interaction between E2 and host amino acid transporter complex formed by SLC3A2 and SLC7A5/LAT1 may facilitate viral entry into host cell. Functionally, ion channel protein that acts as a viroporin and plays an essential role in the assembly, envelopment and secretion of viral particles. Regulates the host cell secretory pathway, which induces the intracellular retention of viral glycoproteins and favors assembly of viral particles. Creates a pore in acidic organelles and releases Ca(2+) and H(+) in the cytoplasm of infected cells, leading to a productive viral infection. High levels of cytoplasmic Ca(2+) may trigger membrane trafficking and transport of viral ER-associated proteins to viroplasms, sites of viral genome replication. This ionic imbalance induces the assembly of the inflammasome complex, which triggers the maturation of pro-IL-1beta into IL-1beta through the action of caspase-1. Targets also host mitochondria and induces mitochondrial depolarization. In addition of its role as a viroporin, acts as a lipid raft adhesion factor. Cysteine protease required for the proteolytic auto-cleavage between the non-structural proteins NS2 and NS3. The N-terminus of NS3 is required for the function of NS2 protease (active region NS2-3). Promotes the initiation of viral particle assembly by mediating the interaction between structural and non-structural proteins. In terms of biological role, displays three enzymatic activities: serine protease with a chymotrypsin-like fold, NTPase and RNA helicase. NS3 serine protease, in association with NS4A, is responsible for the cleavages of NS3-NS4A, NS4A-NS4B, NS4B-NS5A and NS5A-NS5B. The NS3/NS4A complex prevents phosphorylation of host IRF3, thus preventing the establishment of dsRNA induced antiviral state. The NS3/NS4A complex induces host amino acid transporter component SLC3A2, thus contributing to HCV propagation. NS3 RNA helicase binds to RNA and unwinds both dsDNA and dsRNA in the 3' to 5' direction, and likely resolves RNA complicated stable secondary structures in the template strand. Binds a single ATP and catalyzes the unzipping of a single base pair of dsRNA. Inhibits host antiviral proteins TBK1 and IRF3 thereby preventing the establishment of an antiviral state. Cleaves host MAVS/CARDIF thereby preventing the establishment of an antiviral state. Cleaves host TICAM1/TRIF, thereby disrupting TLR3 signaling and preventing the establishment of an antiviral state. Its function is as follows. Peptide cofactor which forms a non-covalent complex with the N-terminal of NS3 serine protease. The NS3/NS4A complex prevents phosphorylation of host IRF3, thus preventing the establishment of dsRNA induced antiviral state. The NS3/NS4A complex induces host amino acid transporter component SLC3A2, thus contributing to HCV propagation. Functionally, induces a specific membrane alteration that serves as a scaffold for the virus replication complex. This membrane alteration gives rise to the so-called ER-derived membranous web that contains the replication complex. NS4B self-interaction contributes to its function in membranous web formation. Promotes host TRIF protein degradation in a CASP8-dependent manner thereby inhibiting host TLR3-mediated interferon signaling. Disrupts the interaction between STING and TBK1 contributing to the inhibition of interferon signaling. Phosphorylated protein that is indispensable for viral replication and assembly. Both hypo- and hyperphosphorylated states are required for the viral life cycle. The hyperphosphorylated form of NS5A is an inhibitor of viral replication. Involved in RNA-binding and especially in binding to the viral genome. Zinc is essential for RNA-binding. Participates in the viral particle production as a result of its interaction with the mature viral core protein. Its interaction with host VAPB may target the viral replication complex to vesicles. Down-regulates viral IRES translation initiation. Mediates interferon resistance, presumably by interacting with and inhibiting host EIF2AK2/PKR. Prevents BIN1-induced apoptosis. Acts as a transcriptional activator of some host genes important for viral replication when localized in the nucleus. Via the interaction with host PACSIN2, modulates lipid droplet formation in order to promote virion assembly. Modulates TNFRSF21/DR6 signaling pathway for viral propagation. In terms of biological role, RNA-dependent RNA polymerase that performs primer-template recognition and RNA synthesis during viral replication. Initiates RNA transcription/replication at a flavin adenine dinucleotide (FAD), resulting in a 5'- FAD cap on viral RNAs. In this way, recognition of viral 5' RNA by host pattern recognition receptors can be bypassed, thereby evading activation of antiviral pathways. The chain is Genome polyprotein from Hepatitis C virus genotype 6d (isolate VN235) (HCV).